Here is a 127-residue protein sequence, read N- to C-terminus: Glycine cleavage system H protein 2 (127 aa).

In terms of domain architecture, Lipoyl-binding spans S24–K105. Position 65 is an N6-lipoyllysine (K65).

It belongs to the GcvH family. In terms of assembly, the glycine cleavage system is composed of four proteins: P, T, L and H. It depends on (R)-lipoate as a cofactor.

The glycine cleavage system catalyzes the degradation of glycine. The H protein shuttles the methylamine group of glycine from the P protein to the T protein. The chain is Glycine cleavage system H protein 2 from Pseudomonas putida (strain ATCC 47054 / DSM 6125 / CFBP 8728 / NCIMB 11950 / KT2440).